We begin with the raw amino-acid sequence, 221 residues long: Phosphoglycolate phosphatase (221 aa).

The active-site Nucleophile is Asp10. Residues Asp10, Asp12, and Asp168 each contribute to the Mg(2+) site.

Belongs to the HAD-like hydrolase superfamily. CbbY/CbbZ/Gph/YieH family. Requires Mg(2+) as cofactor.

It catalyses the reaction 2-phosphoglycolate + H2O = glycolate + phosphate. Its pathway is organic acid metabolism; glycolate biosynthesis; glycolate from 2-phosphoglycolate: step 1/1. Specifically catalyzes the dephosphorylation of 2-phosphoglycolate. Is involved in the dissimilation of the intracellular 2-phosphoglycolate formed during the DNA repair of 3'-phosphoglycolate ends, a major class of DNA lesions induced by oxidative stress. The protein is Phosphoglycolate phosphatase of Xanthomonas campestris pv. campestris (strain 8004).